An 81-amino-acid polypeptide reads, in one-letter code: EC protein I/II (81 aa).

The protein belongs to the metallothionein superfamily. Type 15 family.

Its function is as follows. Binds 5 molecules of zinc. May have a role in Zn(2+) homeostasis during embryogenesis. This Triticum aestivum (Wheat) protein is EC protein I/II.